The sequence spans 696 residues: Elongation factor G (696 aa).

The region spanning 8-286 (EDVRNIGIAA…AVVHYLPSPV (279 aa)) is the tr-type G domain. GTP contacts are provided by residues 17-24 (AHIDAGKT), 81-85 (DTPGH), and 135-138 (NKMD).

Belongs to the TRAFAC class translation factor GTPase superfamily. Classic translation factor GTPase family. EF-G/EF-2 subfamily.

It is found in the cytoplasm. Catalyzes the GTP-dependent ribosomal translocation step during translation elongation. During this step, the ribosome changes from the pre-translocational (PRE) to the post-translocational (POST) state as the newly formed A-site-bound peptidyl-tRNA and P-site-bound deacylated tRNA move to the P and E sites, respectively. Catalyzes the coordinated movement of the two tRNA molecules, the mRNA and conformational changes in the ribosome. This chain is Elongation factor G, found in Sulfurovum sp. (strain NBC37-1).